The following is an 873-amino-acid chain: Bifunctional heparan sulfate N-deacetylase/N-sulfotransferase 3 (873 aa).

Topologically, residues 1–13 (MSFIMKLHRHFQR) are cytoplasmic. The helical; Signal-anchor for type II membrane protein transmembrane segment at 14–34 (TVILLATFCMVSIIISAYYLY) threads the bilayer. The Lumenal portion of the chain corresponds to 35 to 873 (SGYKQENELS…WLRQELQKVR (839 aa)). Residues 36 to 589 (GYKQENELSE…KRHRDIWSKE (554 aa)) form a heparan sulfate N-deacetylase 3 region. N-linked (GlcNAc...) asparagine glycosylation is found at Asn146, Asn226, Asn342, and Asn392. The heparan sulfate N-sulfotransferase 3 stretch occupies residues 590–873 (KTCDRLPKFL…WLRQELQKVR (284 aa)). Catalysis depends on Lys605, which acts as the For sulfotransferase activity. A 3'-phosphoadenylyl sulfate-binding site is contributed by 605-609 (KTGTT). Asn658 carries N-linked (GlcNAc...) asparagine glycosylation. Ser703 provides a ligand contact to 3'-phosphoadenylyl sulfate. The N-linked (GlcNAc...) asparagine glycan is linked to Asn794. A disulfide bond links Cys809 and Cys819. A 3'-phosphoadenylyl sulfate-binding site is contributed by 824 to 828 (KGRKY).

This sequence belongs to the sulfotransferase 1 family. NDST subfamily. In terms of assembly, monomer. In terms of tissue distribution, expressed in brain, kidney, liver, fetal and adult lung, adult pancreas, placenta, fetal spleen and fetal thymus. Not detected in adult/ fetal heart and skeletal muscle.

It is found in the golgi apparatus membrane. The enzyme catalyses alpha-D-glucosaminyl-[heparan sulfate](n) + 3'-phosphoadenylyl sulfate = N-sulfo-alpha-D-glucosaminyl-[heparan sulfate](n) + adenosine 3',5'-bisphosphate + 2 H(+). The protein operates within glycan metabolism; heparan sulfate biosynthesis. Its pathway is glycan metabolism; heparin biosynthesis. Functionally, essential bifunctional enzyme that catalyzes both the N-deacetylation and the N-sulfation of glucosamine (GlcNAc) of the glycosaminoglycan in heparan sulfate. Modifies the GlcNAc-GlcA disaccharide repeating sugar backbone to make N-sulfated heparosan, a prerequisite substrate for later modifications in heparin biosynthesis. Has high deacetylase activity but low sulfotransferase activity. This Homo sapiens (Human) protein is Bifunctional heparan sulfate N-deacetylase/N-sulfotransferase 3.